Here is a 106-residue protein sequence, read N- to C-terminus: UPF0145 protein APL_0465 (106 aa).

It belongs to the UPF0145 family.

This Actinobacillus pleuropneumoniae serotype 5b (strain L20) protein is UPF0145 protein APL_0465.